Consider the following 575-residue polypeptide: UvrABC system protein C (575 aa).

Residues 15-90 (AEPGVYQFEA…IKRHQPRYNV (76 aa)) form the GIY-YIG domain. The region spanning 198-233 (GVLAEPLRREMETAAASQAFERAASLRDRLEAVETF) is the UVR domain.

It belongs to the UvrC family. In terms of assembly, interacts with UvrB in an incision complex.

The protein resides in the cytoplasm. In terms of biological role, the UvrABC repair system catalyzes the recognition and processing of DNA lesions. UvrC both incises the 5' and 3' sides of the lesion. The N-terminal half is responsible for the 3' incision and the C-terminal half is responsible for the 5' incision. This chain is UvrABC system protein C, found in Natronomonas pharaonis (strain ATCC 35678 / DSM 2160 / CIP 103997 / JCM 8858 / NBRC 14720 / NCIMB 2260 / Gabara) (Halobacterium pharaonis).